The primary structure comprises 154 residues: uncharacterized protein (154 aa).

2 helical membrane-spanning segments follow: residues 19-39 (LFAYAAAFLIAVAHVAGGLLL) and 51-71 (ADQVAMGALGLVLAGAVLLFA).

It localises to the cell membrane. This is an uncharacterized protein from Mycobacterium tuberculosis (strain CDC 1551 / Oshkosh).